A 281-amino-acid chain; its full sequence is RNA polymerase sigma factor RpoH (281 aa).

The tract at residues 52–121 (LILSHLRFVI…IHEYVLRNWR (70 aa)) is sigma-70 factor domain-2. Positions 76 to 79 (DLIQ) match the Interaction with polymerase core subunit RpoC motif. Residues 226–277 (ALQSLDARSQDIIKARWLDDNKATLHDLAAKYNVSAERIRQLETNALKKLKS) are sigma-70 factor domain-4. A DNA-binding region (H-T-H motif) is located at residues 250 to 269 (LHDLAAKYNVSAERIRQLET).

This sequence belongs to the sigma-70 factor family. RpoH subfamily. Interacts with the RNA polymerase core enzyme.

Its subcellular location is the cytoplasm. Sigma factors are initiation factors that promote the attachment of RNA polymerase to specific initiation sites and are then released. This sigma factor is involved in regulation of expression of heat shock genes. The protein is RNA polymerase sigma factor RpoH of Haemophilus influenzae (strain ATCC 51907 / DSM 11121 / KW20 / Rd).